Reading from the N-terminus, the 277-residue chain is ATP synthase subunit delta (277 aa).

Belongs to the ATPase delta chain family. F-type ATPases have 2 components, F(1) - the catalytic core - and F(0) - the membrane proton channel. F(1) has five subunits: alpha(3), beta(3), gamma(1), delta(1), epsilon(1). F(0) has three main subunits: a(1), b(2) and c(10-14). The alpha and beta chains form an alternating ring which encloses part of the gamma chain. F(1) is attached to F(0) by a central stalk formed by the gamma and epsilon chains, while a peripheral stalk is formed by the delta and b chains.

It is found in the cell membrane. Its function is as follows. F(1)F(0) ATP synthase produces ATP from ADP in the presence of a proton or sodium gradient. F-type ATPases consist of two structural domains, F(1) containing the extramembraneous catalytic core and F(0) containing the membrane proton channel, linked together by a central stalk and a peripheral stalk. During catalysis, ATP synthesis in the catalytic domain of F(1) is coupled via a rotary mechanism of the central stalk subunits to proton translocation. This protein is part of the stalk that links CF(0) to CF(1). It either transmits conformational changes from CF(0) to CF(1) or is implicated in proton conduction. The sequence is that of ATP synthase subunit delta from Bifidobacterium animalis subsp. lactis (strain AD011).